A 254-amino-acid polypeptide reads, in one-letter code: Decaprenylphosphoryl-2-keto-beta-D-erythro-pentose reductase (254 aa).

Asp-67 serves as a coordination point for NAD(+). The Proton acceptor role is filled by Tyr-160. Lys-164 is an NAD(+) binding site.

It belongs to the short-chain dehydrogenases/reductases (SDR) family. As to quaternary structure, interacts with DprE1 to form an epimerase complex.

It is found in the periplasm. The enzyme catalyses trans,octa-cis-decaprenylphospho-beta-D-arabinofuranose + NAD(+) = trans,octa-cis-decaprenylphospho-beta-D-erythro-pentofuranosid-2-ulose + NADH + H(+). It functions in the pathway cell wall biogenesis; cell wall polysaccharide biosynthesis. Component of the DprE1-DprE2 complex that catalyzes the 2-step epimerization of decaprenyl-phospho-ribose (DPR) to decaprenyl-phospho-arabinose (DPA), a key precursor that serves as the arabinose donor required for the synthesis of cell-wall arabinans. DprE1 catalyzes the first step of epimerization, namely FAD-dependent oxidation of the C2' hydroxyl of DPR to yield the keto intermediate decaprenyl-phospho-2'-keto-D-arabinose (DPX). The intermediate DPX is then transferred to DprE2 subunit of the epimerase complex, most probably through a 'substrate channel' at the interface of DprE1-DprE2 complex. DprE2 then catalyzes the second step of epimerization, the NAD(+)-dependent reduction of DPX that leads to the formation of DPA. This is Decaprenylphosphoryl-2-keto-beta-D-erythro-pentose reductase from Mycobacterium bovis (strain ATCC BAA-935 / AF2122/97).